A 468-amino-acid polypeptide reads, in one-letter code: UDP-N-acetylmuramate--L-alanine ligase (468 aa).

Gly114–Thr120 provides a ligand contact to ATP.

The protein belongs to the MurCDEF family.

Its subcellular location is the cytoplasm. It carries out the reaction UDP-N-acetyl-alpha-D-muramate + L-alanine + ATP = UDP-N-acetyl-alpha-D-muramoyl-L-alanine + ADP + phosphate + H(+). It functions in the pathway cell wall biogenesis; peptidoglycan biosynthesis. Functionally, cell wall formation. The sequence is that of UDP-N-acetylmuramate--L-alanine ligase from Brucella anthropi (strain ATCC 49188 / DSM 6882 / CCUG 24695 / JCM 21032 / LMG 3331 / NBRC 15819 / NCTC 12168 / Alc 37) (Ochrobactrum anthropi).